The chain runs to 704 residues: Elongation factor G (704 aa).

In terms of domain architecture, tr-type G spans 8 to 290; that stretch reads EKYRNIGICA…GVVRYLPAPN (283 aa). GTP is bound by residues 17-24, 88-92, and 142-145; these read AHVDAGKT, DTPGH, and NKMD.

Belongs to the TRAFAC class translation factor GTPase superfamily. Classic translation factor GTPase family. EF-G/EF-2 subfamily.

It is found in the cytoplasm. Its function is as follows. Catalyzes the GTP-dependent ribosomal translocation step during translation elongation. During this step, the ribosome changes from the pre-translocational (PRE) to the post-translocational (POST) state as the newly formed A-site-bound peptidyl-tRNA and P-site-bound deacylated tRNA move to the P and E sites, respectively. Catalyzes the coordinated movement of the two tRNA molecules, the mRNA and conformational changes in the ribosome. The polypeptide is Elongation factor G (Francisella tularensis subsp. mediasiatica (strain FSC147)).